We begin with the raw amino-acid sequence, 79 residues long: MRLFSSKVNSSAQIKDCSTWYPQPGQHISIRTFRELNQVPTSKNTSTKMESQSNGDNSKSTADLQEEVSSLPTTHTQRH.

Polar residues-rich tracts occupy residues 1–13 (MRLF…SSAQ) and 38–79 (QVPT…TQRH). Positions 1–79 (MRLFSSKVNS…SLPTTHTQRH (79 aa)) are disordered.

Belongs to the geminiviridae protein AC4/C4 family.

Pathogenicity determinant. May act as a suppressor of RNA-mediated gene silencing, also known as post-transcriptional gene silencing (PTGS), a mechanism of plant viral defense that limits the accumulation of viral RNAs. The protein is Protein AC4 of Bean golden yellow mosaic virus (isolate Puerto Rico-Japan) (BGYMV).